The primary structure comprises 176 residues: Japanin (176 aa).

Residues 1–24 (MKVLRCLVCSFYIIVSLITTMTIG) form the signal peptide. Residue Glu-47 participates in cholesterol binding. Intrachain disulfides connect Cys-52-Cys-174 and Cys-138-Cys-162. Residues Asn-59 and Asn-155 are each glycosylated (N-linked (GlcNAc...) asparagine).

The protein belongs to the calycin superfamily. Lipocalin family. In terms of assembly, homodimer; non-disulfide-linked. Each monomer accommodates one molecule of cholesterol in a pocket. In terms of tissue distribution, expressed in salivary glands.

It localises to the secreted. In terms of biological role, salivary tick protein that modulates host immune response. This protein blocks dendritic cell (DC) differentiation from monocytes. In addition, it inhibits up-regulation of costimulatory molecules and pro-inflammatory cytokines in response to stimuli and promotes up-regulation of co-inhibitory molecules and the anti-inflammatory cytokine interleukin-10. It has a pocket to accomodate cholesterol, which may have immune-modulatory roles, either directly or through interactions with the host gut microbiota. The chain is Japanin from Rhipicephalus appendiculatus (Brown ear tick).